The sequence spans 241 residues: Ribosomal RNA small subunit methyltransferase G (241 aa).

S-adenosyl-L-methionine contacts are provided by residues G79, F84, A130–E131, and R150.

Belongs to the methyltransferase superfamily. RNA methyltransferase RsmG family.

The protein resides in the cytoplasm. Functionally, specifically methylates the N7 position of a guanine in 16S rRNA. This is Ribosomal RNA small subunit methyltransferase G from Limosilactobacillus reuteri (strain DSM 20016) (Lactobacillus reuteri).